A 212-amino-acid chain; its full sequence is Protein YIPF5 homolog (212 aa).

Residues Met-1–Asp-79 lie on the Cytoplasmic side of the membrane. Residues Thr-80 to Gly-100 form a helical membrane-spanning segment. A topological domain (lumenal) is located at residue Lys-101. Residues Ile-102–Leu-122 traverse the membrane as a helical segment. Residues Asn-123–Lys-128 lie on the Cytoplasmic side of the membrane. A helical transmembrane segment spans residues Gly-129–Leu-149. Over Ser-150–Gly-163 the chain is Lumenal. Residues Tyr-164 to Leu-186 traverse the membrane as a helical segment. At Ser-187–Gln-191 the chain is on the cytoplasmic side. A helical transmembrane segment spans residues Arg-192–Phe-212.

The protein belongs to the YIP1 family.

It localises to the endoplasmic reticulum membrane. Its subcellular location is the golgi apparatus. It is found in the cis-Golgi network membrane. Plays a role in transport between endoplasmic reticulum and Golgi. In Dictyostelium discoideum (Social amoeba), this protein is Protein YIPF5 homolog (yipf5).